The sequence spans 263 residues: tRNA (guanine-N(1)-)-methyltransferase (263 aa).

Residues Gly-124 and Leu-144–Leu-149 each bind S-adenosyl-L-methionine.

Belongs to the RNA methyltransferase TrmD family. Homodimer.

It localises to the cytoplasm. It carries out the reaction guanosine(37) in tRNA + S-adenosyl-L-methionine = N(1)-methylguanosine(37) in tRNA + S-adenosyl-L-homocysteine + H(+). In terms of biological role, specifically methylates guanosine-37 in various tRNAs. The polypeptide is tRNA (guanine-N(1)-)-methyltransferase (Aromatoleum aromaticum (strain DSM 19018 / LMG 30748 / EbN1) (Azoarcus sp. (strain EbN1))).